Consider the following 280-residue polypeptide: ESX-1 secretion-associated protein EspJ (280 aa).

Residue serine 70 is modified to Phosphoserine. Low complexity-rich tracts occupy residues 167–181 and 246–280; these read QTISQTAQQAAQSAQ and PAQAMDTGAGARPAASPLAAPVDPSTPAPSTTTTL. The segment at 167 to 280 is disordered; the sequence is QTISQTAQQA…TPAPSTTTTL (114 aa).

As to quaternary structure, residues 76-280 interact with EsxB and an artificial EsxB-EsxA heterodimer. Post-translationally, phosphorylated at Ser-70.

Its subcellular location is the secreted. Its function is as follows. Could be involved in regulation of growth and intracellular survival. The polypeptide is ESX-1 secretion-associated protein EspJ (Mycobacterium tuberculosis (strain ATCC 25618 / H37Rv)).